The primary structure comprises 136 residues: Globin-2 (136 aa).

A Globin domain is found at 1 to 134; it reads VSQADIAAVQ…ILSQMKIALS (134 aa). A heme b-binding site is contributed by histidine 89.

The protein belongs to the globin family. In terms of assembly, homodimer.

This Phreagena soyoae (Deep-sea cold-seep clam) protein is Globin-2.